A 418-amino-acid polypeptide reads, in one-letter code: Putative heat shock protein HSP 90-alpha A4 (418 aa).

Residues D33, K52, F78, and R204 each coordinate ATP. Disordered stretches follow at residues 255-289 (EDLELPEDEEEKKKQEEGKQKTKQKKNQSLRTSAK) and 383-418 (GLGTDEDDPTADDTSAAVTEEMPPLEGDDDTSRMEK). Residues 265-274 (EKKKQEEGKQ) are compositionally biased toward basic and acidic residues.

The protein belongs to the heat shock protein 90 family. As to quaternary structure, homodimer.

The protein resides in the cytoplasm. Functionally, putative molecular chaperone that may promote the maturation, structural maintenance and proper regulation of specific target proteins. In Homo sapiens (Human), this protein is Putative heat shock protein HSP 90-alpha A4 (HSP90AA4P).